A 413-amino-acid polypeptide reads, in one-letter code: 1-deoxy-D-xylulose 5-phosphate reductoisomerase (413 aa).

Residues Thr-13, Gly-14, Ser-15, Ile-16, Arg-40, Asn-41, and Asn-127 each coordinate NADPH. 1-deoxy-D-xylulose 5-phosphate is bound at residue Lys-128. NADPH is bound at residue Glu-129. Mn(2+) is bound at residue Asp-153. 1-deoxy-D-xylulose 5-phosphate is bound by residues Ser-154, Glu-155, Ser-184, and His-207. Glu-155 contacts Mn(2+). Gly-213 contributes to the NADPH binding site. Residues Ser-220, Asn-225, Lys-226, and Glu-229 each contribute to the 1-deoxy-D-xylulose 5-phosphate site. A Mn(2+)-binding site is contributed by Glu-229.

Belongs to the DXR family. Mg(2+) is required as a cofactor. The cofactor is Mn(2+).

It catalyses the reaction 2-C-methyl-D-erythritol 4-phosphate + NADP(+) = 1-deoxy-D-xylulose 5-phosphate + NADPH + H(+). It participates in isoprenoid biosynthesis; isopentenyl diphosphate biosynthesis via DXP pathway; isopentenyl diphosphate from 1-deoxy-D-xylulose 5-phosphate: step 1/6. In terms of biological role, catalyzes the NADPH-dependent rearrangement and reduction of 1-deoxy-D-xylulose-5-phosphate (DXP) to 2-C-methyl-D-erythritol 4-phosphate (MEP). The sequence is that of 1-deoxy-D-xylulose 5-phosphate reductoisomerase from Nitrosomonas europaea (strain ATCC 19718 / CIP 103999 / KCTC 2705 / NBRC 14298).